A 160-amino-acid polypeptide reads, in one-letter code: Probable chemoreceptor glutamine deamidase CheD 2 (160 aa).

Belongs to the CheD family.

It carries out the reaction L-glutaminyl-[protein] + H2O = L-glutamyl-[protein] + NH4(+). Functionally, probably deamidates glutamine residues to glutamate on methyl-accepting chemotaxis receptors (MCPs), playing an important role in chemotaxis. The polypeptide is Probable chemoreceptor glutamine deamidase CheD 2 (Geobacter sulfurreducens (strain ATCC 51573 / DSM 12127 / PCA)).